We begin with the raw amino-acid sequence, 82 residues long: MGFYMLLTVALLLTSLMNVEATPVNQAERSALEKSGLGNRIQPRYDNCGDAEADCYQSKCMDEETYDEECEASCNYVVANCI.

Residues 1–21 (MGFYMLLTVALLLTSLMNVEA) form the signal peptide. Positions 22–39 (TPVNQAERSALEKSGLGN) are excised as a propeptide. Cystine bridges form between C48-C70, C55-C74, and C60-C81.

In terms of tissue distribution, expressed by the venom duct.

Its subcellular location is the secreted. This is Turripeptide IX-07 from Gemmula speciosa (Splendid gem-turris).